The following is a 525-amino-acid chain: tRNA-2-methylthio-N(6)-dimethylallyladenosine synthase (525 aa).

An MTTase N-terminal domain is found at 14-130 (RTYQVRTYGC…LPTLLERARH (117 aa)). Cys23, Cys59, Cys93, Cys167, Cys171, and Cys174 together coordinate [4Fe-4S] cluster. The Radical SAM core domain maps to 153-400 (RESAYAGWVS…IELQERISLE (248 aa)). A TRAM domain is found at 403–482 (QAQVGRTLEL…PHHLIADGAL (80 aa)).

Belongs to the methylthiotransferase family. MiaB subfamily. As to quaternary structure, monomer. [4Fe-4S] cluster serves as cofactor.

The protein resides in the cytoplasm. It catalyses the reaction N(6)-dimethylallyladenosine(37) in tRNA + (sulfur carrier)-SH + AH2 + 2 S-adenosyl-L-methionine = 2-methylsulfanyl-N(6)-dimethylallyladenosine(37) in tRNA + (sulfur carrier)-H + 5'-deoxyadenosine + L-methionine + A + S-adenosyl-L-homocysteine + 2 H(+). Functionally, catalyzes the methylthiolation of N6-(dimethylallyl)adenosine (i(6)A), leading to the formation of 2-methylthio-N6-(dimethylallyl)adenosine (ms(2)i(6)A) at position 37 in tRNAs that read codons beginning with uridine. This chain is tRNA-2-methylthio-N(6)-dimethylallyladenosine synthase, found in Mycobacterium sp. (strain MCS).